The chain runs to 337 residues: Cholinesterase 2 (337 aa).

S99 acts as the Acyl-ester intermediate in catalysis. The cysteines at positions 153 and 165 are disulfide-linked. E224 acts as the Charge relay system in catalysis. A glycan (N-linked (GlcNAc...) asparagine) is linked at N290.

Belongs to the type-B carboxylesterase/lipase family.

It carries out the reaction an acylcholine + H2O = a carboxylate + choline + H(+). The polypeptide is Cholinesterase 2 (CHE2) (Branchiostoma lanceolatum (Common lancelet)).